Here is a 317-residue protein sequence, read N- to C-terminus: UAP56-interacting factor (317 aa).

Met-1 is subject to N-acetylmethionine. The disordered stretch occupies residues 1–26; sequence MNRFGTRLVGATATPPPPPKARSNEN. Thr-14 is modified (phosphothreonine). Ser-23 carries the phosphoserine modification. Residues 26-44 carry the UAP56-binding motif motif; sequence NLDKIDMSLDDIIKLNRKE. A phosphoserine mark is found at Ser-60 and Ser-117. A Glycyl lysine isopeptide (Lys-Gly) (interchain with G-Cter in SUMO1) cross-link involves residue Lys-139. Residue Lys-260 forms a Glycyl lysine isopeptide (Lys-Gly) (interchain with G-Cter in SUMO2) linkage.

The protein belongs to the UIF family. In terms of assembly, interacts with DDX39B/UAP56 and NXF1; interaction with DDX39B/UAP56 and NXF1 are mutually exclusive. Interacts with SSRP1; required for its recruitment to mRNAs. Interacts with CHTOP.

It localises to the nucleus. The protein resides in the nucleoplasm. It is found in the nucleus speckle. Functionally, required for mRNA export from the nucleus to the cytoplasm. Acts as an adapter that uses the DDX39B/UAP56-NFX1 pathway to ensure efficient mRNA export and delivering to the nuclear pore. Associates with spliced and unspliced mRNAs simultaneously with ALYREF/THOC4. The polypeptide is UAP56-interacting factor (Fyttd1) (Mus musculus (Mouse)).